The sequence spans 275 residues: Large ribosomal subunit protein uL2 (275 aa).

The interval 214 to 275 (RWRGNRPTVR…NKFILSHRNK (62 aa)) is disordered. The segment covering 255-275 (KGKKTRSNKRTNKFILSHRNK) has biased composition (basic residues).

It belongs to the universal ribosomal protein uL2 family. Part of the 50S ribosomal subunit. Forms a bridge to the 30S subunit in the 70S ribosome.

In terms of biological role, one of the primary rRNA binding proteins. Required for association of the 30S and 50S subunits to form the 70S ribosome, for tRNA binding and peptide bond formation. It has been suggested to have peptidyltransferase activity; this is somewhat controversial. Makes several contacts with the 16S rRNA in the 70S ribosome. This is Large ribosomal subunit protein uL2 from Blochmanniella pennsylvanica (strain BPEN).